The primary structure comprises 212 residues: Adenylate kinase (212 aa).

10–15 (GAGKGT) is an ATP binding site. The NMP stretch occupies residues 30 to 59 (STGDMFRAAMANQTEMGRLAKSYIDKGELV). Residues T31, R36, 57 to 59 (ELV), 86 to 89 (GYPR), and Q93 contribute to the AMP site. The segment at 127–159 (GRIINRKTGETFHKVFNPPVDYKEEDYYQREDD) is LID. ATP is bound by residues R128 and 137–138 (TF). AMP-binding residues include R156 and R167. Residue Q195 participates in ATP binding.

Belongs to the adenylate kinase family. As to quaternary structure, monomer.

Its subcellular location is the cytoplasm. The catalysed reaction is AMP + ATP = 2 ADP. It functions in the pathway purine metabolism; AMP biosynthesis via salvage pathway; AMP from ADP: step 1/1. In terms of biological role, catalyzes the reversible transfer of the terminal phosphate group between ATP and AMP. Plays an important role in cellular energy homeostasis and in adenine nucleotide metabolism. The protein is Adenylate kinase of Streptococcus agalactiae serotype Ia (strain ATCC 27591 / A909 / CDC SS700).